A 144-amino-acid chain; its full sequence is MKSYIAKAQEVERKWYVVDAAGKPLGRVASQVASILRGKNKPTFTPNVDCGDFVIVINAEKVVLTGKKLDQKMLRKHSLYAGGLKETPYREVLEKKPEFAFEEAVRRMLPTGVLGRKMLKKLNVYRGAEHDHAAQKPEVLELRY.

The protein belongs to the universal ribosomal protein uL13 family. Part of the 50S ribosomal subunit.

In terms of biological role, this protein is one of the early assembly proteins of the 50S ribosomal subunit, although it is not seen to bind rRNA by itself. It is important during the early stages of 50S assembly. In Clostridium perfringens (strain ATCC 13124 / DSM 756 / JCM 1290 / NCIMB 6125 / NCTC 8237 / Type A), this protein is Large ribosomal subunit protein uL13.